Consider the following 217-residue polypeptide: Membrane-spanning 4-domains subfamily A member 6C (217 aa).

Positions 1 to 20 are enriched in polar residues; it reads MIPQVVTNETITTISPNGIN. Residues 1-33 form a disordered region; the sequence is MIPQVVTNETITTISPNGINFPQKDESQPTQQR. Over 1–46 the chain is Cytoplasmic; that stretch reads MIPQVVTNETITTISPNGINFPQKDESQPTQQRQDSLKKHLKAEIK. Residues 47–67 form a helical membrane-spanning segment; that stretch reads VIVAIQIMCAVTVLALGIILA. The Extracellular segment spans residues 68–84; the sequence is SVPPVPYFNSVFSVLLK. Residues 85–105 form a helical membrane-spanning segment; sequence SGYPFIGALFFIASGILSIIT. Residues 106-121 lie on the Cytoplasmic side of the membrane; it reads ERKSTKPLVDASLTLN. A helical membrane pass occupies residues 122–142; sequence ILSVSFAFVGIIIISVSLAGL. The Extracellular portion of the chain corresponds to 143–186; that stretch reads HPASEQCKQSKELSLIEHDYYQPFYNSDRSECAVTKSILTGALS. A helical transmembrane segment spans residues 187 to 207; that stretch reads VMLIISVLELGLALLSAMLWL. Topologically, residues 208–217 are cytoplasmic; it reads REGVLTSLRM.

It belongs to the MS4A family. In terms of tissue distribution, expressed only by thymus, spleen, peripheral lymph node and bone marrow.

The protein resides in the membrane. Functionally, may be involved in signal transduction as a component of a multimeric receptor complex. This chain is Membrane-spanning 4-domains subfamily A member 6C (Ms4a6c), found in Mus musculus (Mouse).